The primary structure comprises 164 residues: Protein-export protein SecB (164 aa).

Belongs to the SecB family. In terms of assembly, homotetramer, a dimer of dimers. One homotetramer interacts with 1 SecA dimer.

Its subcellular location is the cytoplasm. Functionally, one of the proteins required for the normal export of preproteins out of the cell cytoplasm. It is a molecular chaperone that binds to a subset of precursor proteins, maintaining them in a translocation-competent state. It also specifically binds to its receptor SecA. This chain is Protein-export protein SecB, found in Herminiimonas arsenicoxydans.